We begin with the raw amino-acid sequence, 273 residues long: 4-hydroxy-tetrahydrodipicolinate reductase (273 aa).

NAD(+)-binding positions include 12 to 17 (GAGGRM) and Glu38. Residue Arg39 coordinates NADP(+). NAD(+) is bound by residues 102 to 104 (GTT) and 126 to 129 (AANF). Residue His159 is the Proton donor/acceptor of the active site. His160 lines the (S)-2,3,4,5-tetrahydrodipicolinate pocket. Residue Lys163 is the Proton donor of the active site. 169–170 (GT) contacts (S)-2,3,4,5-tetrahydrodipicolinate.

This sequence belongs to the DapB family. In terms of assembly, homotetramer.

The protein resides in the cytoplasm. The enzyme catalyses (S)-2,3,4,5-tetrahydrodipicolinate + NAD(+) + H2O = (2S,4S)-4-hydroxy-2,3,4,5-tetrahydrodipicolinate + NADH + H(+). The catalysed reaction is (S)-2,3,4,5-tetrahydrodipicolinate + NADP(+) + H2O = (2S,4S)-4-hydroxy-2,3,4,5-tetrahydrodipicolinate + NADPH + H(+). It participates in amino-acid biosynthesis; L-lysine biosynthesis via DAP pathway; (S)-tetrahydrodipicolinate from L-aspartate: step 4/4. In terms of biological role, catalyzes the conversion of 4-hydroxy-tetrahydrodipicolinate (HTPA) to tetrahydrodipicolinate. In Escherichia fergusonii (strain ATCC 35469 / DSM 13698 / CCUG 18766 / IAM 14443 / JCM 21226 / LMG 7866 / NBRC 102419 / NCTC 12128 / CDC 0568-73), this protein is 4-hydroxy-tetrahydrodipicolinate reductase.